We begin with the raw amino-acid sequence, 102 residues long: Urease subunit beta (102 aa).

The protein belongs to the urease beta subunit family. Heterotrimer of UreA (gamma), UreB (beta) and UreC (alpha) subunits. Three heterotrimers associate to form the active enzyme.

It localises to the cytoplasm. The catalysed reaction is urea + 2 H2O + H(+) = hydrogencarbonate + 2 NH4(+). Its pathway is nitrogen metabolism; urea degradation; CO(2) and NH(3) from urea (urease route): step 1/1. The polypeptide is Urease subunit beta (Acinetobacter baumannii (strain ACICU)).